Consider the following 395-residue polypeptide: Ankyrin repeat domain-containing protein 65 (395 aa).

ANK repeat units lie at residues 52–81 (QAWG…SVEE), 85–114 (AGRT…QVGA), 118–147 (AGRT…PANA), 151–180 (AGLT…PGPT), 185–212 (RGWT…GGAR), 213–241 (LDSV…PVDA), 245–274 (VGAT…DPSL), 278–307 (HGRS…EVDS), 311–340 (LGLT…EINA), and 344–373 (LHKT…SPTL).

In Bos taurus (Bovine), this protein is Ankyrin repeat domain-containing protein 65 (ANKRD65).